The chain runs to 209 residues: Uracil phosphoribosyltransferase (209 aa).

5-phospho-alpha-D-ribose 1-diphosphate-binding positions include arginine 79, arginine 104, and 131–139; that span reads DPMLATGGS. Uracil contacts are provided by residues isoleucine 194 and 199–201; that span reads GDA. Position 200 (aspartate 200) interacts with 5-phospho-alpha-D-ribose 1-diphosphate.

Belongs to the UPRTase family. The cofactor is Mg(2+).

It carries out the reaction UMP + diphosphate = 5-phospho-alpha-D-ribose 1-diphosphate + uracil. The protein operates within pyrimidine metabolism; UMP biosynthesis via salvage pathway; UMP from uracil: step 1/1. With respect to regulation, allosterically activated by GTP. Catalyzes the conversion of uracil and 5-phospho-alpha-D-ribose 1-diphosphate (PRPP) to UMP and diphosphate. The protein is Uracil phosphoribosyltransferase of Alkaliphilus oremlandii (strain OhILAs) (Clostridium oremlandii (strain OhILAs)).